The following is a 776-amino-acid chain: LPS-assembly protein LptD (776 aa).

Positions 1 to 24 (MQHFSRTFLAASIATALFAPYAQA) are cleaved as a signal peptide.

The protein belongs to the LptD family. In terms of assembly, component of the lipopolysaccharide transport and assembly complex. Interacts with LptE and LptA.

The protein localises to the cell outer membrane. In terms of biological role, together with LptE, is involved in the assembly of lipopolysaccharide (LPS) at the surface of the outer membrane. The protein is LPS-assembly protein LptD of Vibrio vulnificus (strain YJ016).